The following is a 118-amino-acid chain: Large ribosomal subunit protein bL20 (118 aa).

It belongs to the bacterial ribosomal protein bL20 family.

In terms of biological role, binds directly to 23S ribosomal RNA and is necessary for the in vitro assembly process of the 50S ribosomal subunit. It is not involved in the protein synthesizing functions of that subunit. The protein is Large ribosomal subunit protein bL20 of Trichormus variabilis (strain ATCC 29413 / PCC 7937) (Anabaena variabilis).